The following is a 537-amino-acid chain: Lysine--tRNA ligase (537 aa).

Positions 30 to 38 match the 'HIGH' region motif; that stretch reads PSGNIHIGN. Positions 276–280 match the 'KMSKS' region motif; that stretch reads AMSSS.

It belongs to the class-I aminoacyl-tRNA synthetase family.

Its subcellular location is the cytoplasm. It carries out the reaction tRNA(Lys) + L-lysine + ATP = L-lysyl-tRNA(Lys) + AMP + diphosphate. This is Lysine--tRNA ligase from Methanosarcina barkeri (strain Fusaro / DSM 804).